An 860-amino-acid chain; its full sequence is M-phase phosphoprotein 8 (860 aa).

The residue at position 1 (Met1) is an N-acetylmethionine. A phosphoserine mark is found at Ser51, Ser85, Ser136, and Ser138. The region spanning 59 to 118 is the Chromo domain; the sequence is FEVEKILDMKTEGGKVLYKVRWKGYTSDDDTWEPEIHLEDCKEVLLEFRKKIAENKAKAV. Residues 80–87 are histone H3K9me3 binding; that stretch reads WKGYTSDD. Residues 129–141 are compositionally biased toward polar residues; sequence NDIFEANSDSDQQ. A disordered region spans residues 129 to 191; sequence NDIFEANSDS…SKPDLESSLE (63 aa). Position 144 is a phosphothreonine (Thr144). A phosphoserine; by CDK1 mark is found at Ser149 and Ser164. Composition is skewed to basic and acidic residues over residues 159 to 169 and 177 to 186; these read QREEKSPDDLK and KLKDKSKPDL. Ser188, Ser189, and Ser192 each carry phosphoserine. The span at 206-249 shows a compositional bias: basic and acidic residues; that stretch reads AKEELKESKKPKKDEVKETKELKKVKKGEIRDLKTKTREDPKEN. The disordered stretch occupies residues 206 to 440; that stretch reads AKEELKESKK…GRKEPKGLKT (235 aa). Residues 259–268 show a composition bias toward low complexity; it reads ESQVESESSV. Residues Ser266, Ser272, and Ser279 each carry the phosphoserine modification. Positions 280-314 are enriched in basic and acidic residues; it reads EGLHSDSREEKQNTKSARERAGQDMGLEHGFEKPL. Residue Ser319 is modified to Phosphoserine. Residue Thr334 is modified to Phosphothreonine; by CDK1. Residues 336-377 are compositionally biased toward basic and acidic residues; that stretch reads RKAEDTRENRKLENKNAFLEKKTVPKKQRNQDRSKSAAELEK. Phosphothreonine; by CDK1 is present on Thr385. Residues Ser392, Ser400, and Ser403 each carry the phosphoserine modification. Positions 408-440 are enriched in basic and acidic residues; sequence KETKRNESKEKYQKRHDSDKEEKGRKEPKGLKT. An interaction with humanin region spans residues 431–560; sequence GRKEPKGLKT…HLDGKDENFA (130 aa). The residue at position 454 (Thr454) is a Phosphothreonine. Residues 458 to 496 form a disordered region; it reads KNDVSENNRKREEIPLDFKTIDDHKTKENKQSLKERRNT. ANK repeat units lie at residues 600–629, 633–662, 666–695, and 699–728; these read SGMTLVMLAAAGGQDDLLRLLITKGAKVNG, NGTTALIHAAEKNFLTTVAILLEAGAFVNV, NGETALMKACKRGNSDIVRLVIECGADCNI, and HQNSALHFAKQSNNVLVYDLLKNHLETLSR.

As to quaternary structure, homodimer. Interacts (via chromo domain) with histone H3K9me3. Has the highest affinity for H3K9me3, and lesser affinity for H3K9me2 and H3K9me1. Component of the HUSH complex; at least composed of TASOR, PPHLN1 and MPHOSPH8. Interacts with DNMT3, EHMT1 and SETDB1. Interacts with MORC2; the interaction associateS MORC2 with the HUSH complex which recruits MORC2 to heterochromatic loci. Interacts with ZNF638; leading to recruitment of the HUSH complex to unintegrated retroviral DNA. Interacts with TASOR. Interacts with humanin. Post-translationally, phosphorylated in M (mitotic) phase. Phosphorylation by CDK1 promotes dissociation from chromatin.

Its subcellular location is the nucleus. The protein localises to the chromosome. Functionally, heterochromatin component that specifically recognizes and binds methylated 'Lys-9' of histone H3 (H3K9me) and promotes recruitment of proteins that mediate epigenetic repression. Mediates recruitment of the HUSH complex to H3K9me3 sites: the HUSH complex is recruited to genomic loci rich in H3K9me3 and is required to maintain transcriptional silencing by promoting recruitment of SETDB1, a histone methyltransferase that mediates further deposition of H3K9me3, as well as MORC2. Binds H3K9me and promotes DNA methylation by recruiting DNMT3A to target CpG sites; these can be situated within the coding region of the gene. Mediates down-regulation of CDH1 expression. Also represses L1 retrotransposons in collaboration with MORC2 and, probably, SETDB1, the silencing is dependent of repressive epigenetic modifications, such as H3K9me3 mark. Silencing events often occur within introns of transcriptionally active genes, and lead to the down-regulation of host gene expression. The HUSH complex is also involved in the silencing of unintegrated retroviral DNA by being recruited by ZNF638: some part of the retroviral DNA formed immediately after infection remains unintegrated in the host genome and is transcriptionally repressed. This is M-phase phosphoprotein 8 from Homo sapiens (Human).